A 780-amino-acid chain; its full sequence is ATP-dependent 6-phosphofructokinase, liver type (780 aa).

Ala-2 is subject to N-acetylalanine. Residues Ala-2–His-390 are N-terminal catalytic PFK domain 1. Residues Gly-25, Arg-88–Cys-89, and Gly-118–Ser-121 each bind ATP. Asp-119 contacts Mg(2+). Residues Ser-164–Asp-166, Arg-201, Met-208–Arg-210, Glu-264, Arg-292, and His-298–Arg-301 each bind substrate. The active-site Proton acceptor is Asp-166. A Phosphoserine modification is found at Ser-377. Residues Gln-391–Phe-400 are interdomain linker. Residues Ser-401–Phe-780 form a C-terminal regulatory PFK domain 2 region. Residues Arg-470, Thr-527–Asn-531, Arg-565, Met-572–Gly-574, and Glu-628 each bind beta-D-fructose 2,6-bisphosphate. The O-linked (GlcNAc) serine glycan is linked to Ser-529. Tyr-640 carries the post-translational modification Phosphotyrosine. Beta-D-fructose 2,6-bisphosphate-binding positions include Arg-654, His-660 to Gln-663, and Arg-734. At Ser-775 the chain carries Phosphoserine.

It belongs to the phosphofructokinase type A (PFKA) family. ATP-dependent PFK group I subfamily. Eukaryotic two domain clade 'E' sub-subfamily. Homo- and heterotetramers. Phosphofructokinase (PFK) enzyme functions as a tetramer composed of different combinations of 3 types of subunits, called PFKM (M), PFKL (L) and PFKP (P). The composition of the PFK tetramer differs according to the tissue type it is present in. The kinetic and regulatory properties of the tetrameric enzyme are dependent on the subunit composition, hence can vary across tissues. Mg(2+) is required as a cofactor. In terms of processing, glcNAcylation at Ser-529 by OGT decreases enzyme activity, leading to redirect glucose flux through the oxidative pentose phosphate pathway. Glycosylation is stimulated by both hypoxia and glucose deprivation.

It localises to the cytoplasm. It carries out the reaction beta-D-fructose 6-phosphate + ATP = beta-D-fructose 1,6-bisphosphate + ADP + H(+). It participates in carbohydrate degradation; glycolysis; D-glyceraldehyde 3-phosphate and glycerone phosphate from D-glucose: step 3/4. Its activity is regulated as follows. Allosterically activated by ADP, AMP, or fructose 2,6-bisphosphate, and allosterically inhibited by ATP or citrate. GlcNAcylation by OGT overcomes allosteric regulation. In terms of biological role, catalyzes the phosphorylation of D-fructose 6-phosphate to fructose 1,6-bisphosphate by ATP, the first committing step of glycolysis. Negatively regulates the phagocyte oxidative burst in response to bacterial infection by controlling cellular NADPH biosynthesis and NADPH oxidase-derived reactive oxygen species. Upon macrophage activation, drives the metabolic switch toward glycolysis, thus preventing glucose turnover that produces NADPH via pentose phosphate pathway. This is ATP-dependent 6-phosphofructokinase, liver type (PFKL) from Pongo abelii (Sumatran orangutan).